The sequence spans 406 residues: 2,3-bisphosphoglycerate-independent phosphoglycerate mutase (406 aa).

It belongs to the BPG-independent phosphoglycerate mutase family. A-PGAM subfamily.

It catalyses the reaction (2R)-2-phosphoglycerate = (2R)-3-phosphoglycerate. Its pathway is carbohydrate degradation; glycolysis; pyruvate from D-glyceraldehyde 3-phosphate: step 3/5. In terms of biological role, catalyzes the interconversion of 2-phosphoglycerate and 3-phosphoglycerate. The polypeptide is 2,3-bisphosphoglycerate-independent phosphoglycerate mutase (Methanococcus maripaludis (strain C7 / ATCC BAA-1331)).